Consider the following 1782-residue polypeptide: Signal-induced proliferation-associated 1-like protein 1 (1782 aa).

3 disordered regions span residues 1 to 28, 47 to 125, and 140 to 171; these read MTSL…GAPK, GSSV…VSLN, and KNKT…RRIR. Residues 84 to 94 are compositionally biased toward basic and acidic residues; it reads PPRKENVKESS. The segment covering 95–125 has biased composition (low complexity); it reads RSSQEIETSSCLESLSSKGSPVSQGSSVSLN. Ser-162, Ser-187, Ser-193, Ser-208, Ser-255, and Ser-288 each carry phosphoserine. The segment at 277 to 297 is disordered; that stretch reads EREKPLKRRSKSETGDSSIFR. A Rap-GAP domain is found at 599–816; the sequence is LMKLDEQGLN…RTRQEYLKDL (218 aa). The PDZ domain occupies 953–1031; sequence EMTLRRNGLG…VVIIPPHDDC (79 aa). Disordered stretches follow at residues 1069 to 1128 and 1144 to 1213; these read QRNA…RLSP and SQCR…SLAD. A phosphoserine mark is found at Ser-1078, Ser-1087, Ser-1116, Ser-1127, Ser-1149, Ser-1170, and Ser-1181. Over residues 1080–1093 the composition is skewed to polar residues; the sequence is QVPSQLQSPMTSRL. The segment covering 1149–1159 has biased composition (low complexity); sequence SPSNLSSSSET. Over residues 1186–1205 the composition is skewed to polar residues; the sequence is DRQNTQSDISGSGKSTPSWQ. Phosphoserine occurs at positions 1234 and 1249. The segment at 1247-1285 is disordered; it reads HLSPNKQGHSDSHYSSHSSSNTLSSNASSAHSDEKWYDG. Low complexity predominate over residues 1261-1276; the sequence is SSHSSSNTLSSNASSA. A Phosphoserine; by PLK2 modification is found at Ser-1305. The interval 1307 to 1342 is disordered; that stretch reads IDTASYGPSHGSTASLGASTSSPRSGPGKEKVAPLW. Thr-1309 is subject to Phosphothreonine; by PLK2. The segment covering 1315–1328 has biased composition (low complexity); it reads SHGSTASLGASTSS. Ser-1328 carries the post-translational modification Phosphoserine; by CDK5. A Phosphoserine modification is found at Ser-1345. Positions 1358–1368 are enriched in basic and acidic residues; it reads TEGHGMDRKAE. A disordered region spans residues 1358 to 1454; it reads TEGHGMDRKA…SSSGPRTFYP (97 aa). A phosphoserine mark is found at Ser-1369, Ser-1370, Ser-1391, Ser-1410, and Ser-1412. Residues 1378–1410 are compositionally biased toward polar residues; the sequence is KSQGGSSPLSRENSTFSINDAASHTSTMSSRHS. A compositionally biased stretch (low complexity) spans 1432–1447; sequence SSQLAPSFSSSSSSSS. A phosphoserine mark is found at Ser-1507 and Ser-1528. Thr-1530 bears the Phosphothreonine mark. A phosphoserine mark is found at Ser-1533, Ser-1544, Ser-1547, Ser-1564, and Ser-1567. Asymmetric dimethylarginine is present on Arg-1580. Phosphoserine occurs at positions 1582, 1624, 1626, 1629, 1687, 1690, 1707, 1708, and 1712. The interval 1625–1647 is disordered; sequence ASDSSLTDIQETRRQPIPDPGLM. Residues 1713-1773 adopt a coiled-coil conformation; sequence PTLASKVDQL…ASDKLKKFTE (61 aa).

As to quaternary structure, interacts with DLG4, PDLIM5, PDLIM7 and LZTS3. Interacts with the actin cytoskeleton. Interacts (via PDZ domain) with EPHA4 (via PDZ motif); controls neuronal morphology through regulation of the RAP1 (RAP1A or RAP1B) and RAP2 (RAP2A, RAP2B or RAP2C) GTPases. In terms of processing, ubiquitinated and degraded by the SCF(BTRC) following phosphorylation by PLK2. Post-translationally, phosphorylated at Ser-1328 by CDK5, creating a docking site for the POLO box domains of PLK2. Subsequently, PLK2 binds and phosphorylates SIPA1L1, leading to ubiquitination and degradation by the proteasome.

The protein resides in the cytoplasm. The protein localises to the cytoskeleton. Its subcellular location is the postsynaptic density. It localises to the synapse. It is found in the synaptosome. Stimulates the GTPase activity of RAP2A. Promotes reorganization of the actin cytoskeleton and recruits DLG4 to F-actin. Contributes to the regulation of dendritic spine morphogenesis. The chain is Signal-induced proliferation-associated 1-like protein 1 (Sipa1l1) from Mus musculus (Mouse).